Here is a 371-residue protein sequence, read N- to C-terminus: Neutral protease 2 homolog MGYG_03465 (371 aa).

The N-terminal stretch at 1–19 (MQFVAVLAALGALVAPAAA) is a signal peptide. The propeptide occupies 20–188 (YPHAPMNETL…SIHARALEKR (169 aa)). Cystine bridges form between C196-C267 and C274-C292. Position 316 (H316) interacts with Zn(2+). E317 is a catalytic residue. H320 and D331 together coordinate Zn(2+).

Belongs to the peptidase M35 family. The cofactor is Zn(2+).

The protein localises to the secreted. It catalyses the reaction Preferential cleavage of bonds with hydrophobic residues in P1'. Also 3-Asn-|-Gln-4 and 8-Gly-|-Ser-9 bonds in insulin B chain.. Functionally, secreted metalloproteinase that allows assimilation of proteinaceous substrates. Shows high activities on basic nuclear substrates such as histone and protamine. May be involved in virulence. The sequence is that of Neutral protease 2 homolog MGYG_03465 from Arthroderma gypseum (strain ATCC MYA-4604 / CBS 118893) (Microsporum gypseum).